A 316-amino-acid chain; its full sequence is Sorting nexin-20 (316 aa).

A disordered region spans residues 1-57 (MASHKHPGSPGWTGPICQDMAGTTPKASAPRPDLPRPGPEDHLEAQGSPSSNSSMTT). S3 is modified (phosphoserine). A compositionally biased stretch (polar residues) spans 47-57 (GSPSSNSSMTT). The PX domain maps to 74-191 (VKLLFEIASA…DFLTRPELKE (118 aa)). The a 1,2-diacyl-sn-glycero-3-phospho-(1D-myo-inositol-3-phosphate) site is built by R116, S118, K143, and R157.

Belongs to the sorting nexin family. Interacts with SELPLG. Interaction with SELPLG is controversial.

The protein localises to the early endosome membrane. It localises to the cell membrane. Its subcellular location is the cytoplasm. It is found in the nucleus. Functionally, may play a role in cellular vesicle trafficking. Has been proposed to function as a sorting protein that targets SELPLG into endosomes, but has no effect on SELPLG internalization from the cell surface, or on SELPLG-mediated cell-cell adhesion. This is Sorting nexin-20 (SNX20) from Bos taurus (Bovine).